A 574-amino-acid chain; its full sequence is Cell division cycle 7-related protein kinase (574 aa).

Ser-27 carries the post-translational modification Phosphoserine. Positions 58-574 (FKIEDKIGEG…LHPFFKDMSL (517 aa)) constitute a Protein kinase domain. Residues 64 to 72 (IGEGTFSSV) and Lys-90 contribute to the ATP site. Asp-177 acts as the Proton acceptor in catalysis. Lys-268 participates in a covalent cross-link: Glycyl lysine isopeptide (Lys-Gly) (interchain with G-Cter in SUMO2). Thr-503 is subject to Phosphothreonine.

It belongs to the protein kinase superfamily. Ser/Thr protein kinase family. CDC7 subfamily. As to quaternary structure, forms a complex with either DBF4/DBF4A or DBF4B, leading to the activation of the kinase activity. Interacts with CLASPIN (via the acidic patch); the interaction is required for phosphorylation of MCM proteins and CLASPIN. The cofactor is Mg(2+).

The protein localises to the nucleus. It catalyses the reaction L-seryl-[protein] + ATP = O-phospho-L-seryl-[protein] + ADP + H(+). It carries out the reaction L-threonyl-[protein] + ATP = O-phospho-L-threonyl-[protein] + ADP + H(+). Its function is as follows. Kinase involved in initiation of DNA replication. Phosphorylates critical substrates that regulate the G1/S phase transition and initiation of DNA replication, such as MCM proteins and CLASPIN. The sequence is that of Cell division cycle 7-related protein kinase from Homo sapiens (Human).